A 484-amino-acid chain; its full sequence is Probable efflux pump outer membrane protein TtgC (484 aa).

The N-terminal stretch at 1-17 (MTKSLLSLAVTAFILGG) is a signal peptide. Cys-18 carries N-palmitoyl cysteine lipidation. Cys-18 carries S-diacylglycerol cysteine lipidation.

It belongs to the outer membrane factor (OMF) (TC 1.B.17) family.

It is found in the cell outer membrane. Functionally, probable outer membrane component of the TtgABC efflux pump with unknown specificity. This is Probable efflux pump outer membrane protein TtgC (ttgC) from Pseudomonas putida (strain ATCC 47054 / DSM 6125 / CFBP 8728 / NCIMB 11950 / KT2440).